The primary structure comprises 194 residues: NADH-quinone oxidoreductase subunit B (194 aa).

Residues 1–11 show a composition bias toward pro residues; it reads MGVIATPPPSV. The segment at 1–24 is disordered; the sequence is MGVIATPPPSVQGPSSQVPSSAPI. Low complexity predominate over residues 12–21; the sequence is QGPSSQVPSS. Residues Cys-72, Cys-73, Cys-137, and Cys-167 each coordinate [4Fe-4S] cluster.

The protein belongs to the complex I 20 kDa subunit family. In terms of assembly, NDH-1 is composed of 14 different subunits. Subunits NuoB, C, D, E, F, and G constitute the peripheral sector of the complex. It depends on [4Fe-4S] cluster as a cofactor.

Its subcellular location is the cell inner membrane. It catalyses the reaction a quinone + NADH + 5 H(+)(in) = a quinol + NAD(+) + 4 H(+)(out). Its function is as follows. NDH-1 shuttles electrons from NADH, via FMN and iron-sulfur (Fe-S) centers, to quinones in the respiratory chain. The immediate electron acceptor for the enzyme in this species is believed to be ubiquinone. Couples the redox reaction to proton translocation (for every two electrons transferred, four hydrogen ions are translocated across the cytoplasmic membrane), and thus conserves the redox energy in a proton gradient. In Rhodospirillum centenum (strain ATCC 51521 / SW), this protein is NADH-quinone oxidoreductase subunit B.